We begin with the raw amino-acid sequence, 428 residues long: Palmitoyltransferase pfa4 (428 aa).

The Cytoplasmic segment spans residues 1 to 10 (MLCRSFNISQ). The helical transmembrane segment at 11 to 31 (LAIPFVSVLISFLAYTSQLFF) threads the bilayer. The Lumenal segment spans residues 32–43 (YYFEEAPLRSEE). The helical transmembrane segment at 44–61 (FWRLNIFAVCIWVCYYRA) threads the bilayer. The Cytoplasmic portion of the chain corresponds to 62–134 (CTVDPGRIPK…SNCVSHFTYP (73 aa)). Residues 91-141 (RWCRRCEAFKPPRAHHCKTCQRCIPKMDHHCPWTSNCVSHFTYPHFMRFLF) form the DHHC domain. Cys121 functions as the S-palmitoyl cysteine intermediate in the catalytic mechanism. The chain crosses the membrane as a helical span at residues 135-155 (HFMRFLFYAVVGMGYLETLLF). The Lumenal portion of the chain corresponds to 156–177 (ERASIVWASRHLPSYLGPGLGQ). Residues 178–198 (LVHLFILLVVNSLTWLALFIL) form a helical membrane-spanning segment. Residues 199 to 428 (LLRSIWSLAL…GILMQRRRQQ (230 aa)) lie on the Cytoplasmic side of the membrane. Positions 339-400 (QRSNDASHSG…WKNSEGDRLR (62 aa)) are disordered. Residues 360–373 (DRFNENKAKERLSE) show a composition bias toward basic and acidic residues. Residues 374–388 (SESDFSDDEEVQDGE) are compositionally biased toward acidic residues. The segment covering 389 to 400 (EGWKNSEGDRLR) has biased composition (basic and acidic residues).

Belongs to the DHHC palmitoyltransferase family. PFA4 subfamily.

The protein resides in the endoplasmic reticulum membrane. The enzyme catalyses L-cysteinyl-[protein] + hexadecanoyl-CoA = S-hexadecanoyl-L-cysteinyl-[protein] + CoA. Functionally, mediates the reversible addition of palmitate to target proteins, thereby regulating their membrane association and biological function. This chain is Palmitoyltransferase pfa4, found in Aspergillus fumigatus (strain ATCC MYA-4609 / CBS 101355 / FGSC A1100 / Af293) (Neosartorya fumigata).